A 279-amino-acid polypeptide reads, in one-letter code: MVELTITGDDDDILSMFFDEEFVPHAFVDILLSNALNEDQIQTQSVSSLLLTRLDFYTKNLTKELESTIWNLDKLSQTLPRTWASSRYHKEAEQNDSSLYSTESLKSSKLEYYLDTLASAVRALETGMHNVTEKLSDLDNENNRNTNVRQQLQSLMLIKERIEKVVYYLEQVRTVTNISTVRENNTTSTGTDLSITDFRTSLKALEDTIDESLSSAIDNEAKDETNKDLIGRIDSLSELKCLFKGLDKFFAEYSNFSESIKSKAQSYLSTKNIDDGMIS.

As to quaternary structure, component of the conserved oligomeric Golgi (COG or Sec34/Sec35) complex which consists of eight different proteins COG1-COG8.

The protein resides in the golgi apparatus membrane. Its function is as follows. Acts as a component of the peripheral membrane COG complex that is involved in intra-Golgi protein trafficking. COG is located at the cis-Golgi, and regulates tethering of retrograde intra-Golgi vesicles and possibly a number of other membrane trafficking events. This is Conserved oligomeric Golgi complex subunit 7 (COG7) from Saccharomyces cerevisiae (strain ATCC 204508 / S288c) (Baker's yeast).